Here is a 334-residue protein sequence, read N- to C-terminus: Formamidase (334 aa).

The CN hydrolase domain occupies 14–260; the sequence is FLVAAIQFPV…WEIVTGEIYP (247 aa). The active-site Proton acceptor is the E60. The Proton donor role is filled by K133. C166 functions as the Nucleophile in the catalytic mechanism.

The protein belongs to the carbon-nitrogen hydrolase superfamily. Aliphatic amidase family.

The enzyme catalyses formamide + H2O = formate + NH4(+). Functionally, is an aliphatic amidase with a restricted substrate specificity, as it only hydrolyzes formamide. The sequence is that of Formamidase from Helicobacter pylori (strain J99 / ATCC 700824) (Campylobacter pylori J99).